We begin with the raw amino-acid sequence, 229 residues long: Ribonuclease 3 (229 aa).

Residues 4–133 (WEELQESVGF…FIGALYLDNG (130 aa)) form the RNase III domain. Mg(2+) is bound at residue Glu46. The active site involves Asp50. 2 residues coordinate Mg(2+): Asp119 and Glu122. Glu122 is an active-site residue. Positions 159–228 (DYKTQLQEIV…AQFAINQLTH (70 aa)) constitute a DRBM domain.

Belongs to the ribonuclease III family. As to quaternary structure, homodimer. Mg(2+) serves as cofactor.

Its subcellular location is the cytoplasm. It carries out the reaction Endonucleolytic cleavage to 5'-phosphomonoester.. Its function is as follows. Digests double-stranded RNA. Involved in the processing of primary rRNA transcript to yield the immediate precursors to the large and small rRNAs (23S and 16S). Processes some mRNAs, and tRNAs when they are encoded in the rRNA operon. Processes pre-crRNA and tracrRNA of type II CRISPR loci if present in the organism. This is Ribonuclease 3 from Listeria innocua serovar 6a (strain ATCC BAA-680 / CLIP 11262).